The following is a 260-amino-acid chain: Exosome complex component Rrp4 (260 aa).

The 70-residue stretch at 59 to 128 folds into the S1 motif domain; it reads NDVVIGIVIV…NSMKVELALR (70 aa). The KH domain occupies 136-194; that stretch reads KTGQIVEVEPVKVPRVIGHGGSMISMLKKETNCSIFVGQNGRIWIDGKDDDVELLSKAL.

This sequence belongs to the RRP4 family. As to quaternary structure, component of the archaeal exosome complex. Forms a trimer of Rrp4 and/or Csl4 subunits. The trimer associates with a hexameric ring-like arrangement composed of 3 Rrp41-Rrp42 heterodimers.

It localises to the cytoplasm. Functionally, non-catalytic component of the exosome, which is a complex involved in RNA degradation. Increases the RNA binding and the efficiency of RNA degradation. Confers strong poly(A) specificity to the exosome. The chain is Exosome complex component Rrp4 from Methanosarcina barkeri (strain Fusaro / DSM 804).